The primary structure comprises 849 residues: DNA mismatch repair protein MutS (849 aa).

665–672 lines the ATP pocket; it reads GPNMAGKS.

This sequence belongs to the DNA mismatch repair MutS family.

Functionally, this protein is involved in the repair of mismatches in DNA. It is possible that it carries out the mismatch recognition step. This protein has a weak ATPase activity. This Wolbachia pipientis wMel protein is DNA mismatch repair protein MutS.